The primary structure comprises 227 residues: MKINILTLFPRYFEVFCRESIIGKAIKHKKITINVVNFRDFSKNKHKKVDDYVYGGGPGLLLQIQPVVDALEKVGGLKIALSPQGQKFDQGVARKLAKEDEITILCGHYEGFDQRIIDNFIDFELSLGDFILTGGEIAAMAIIDAIIRLKPDIINPESLKNETFNDFLLDFPQYSRPANFRGLEVPNVLISGNHREIGEWRQEQRELITKKKRPDLWEKFLKIKNKK.

S-adenosyl-L-methionine-binding positions include G107 and 127-132 (LGDFIL).

Belongs to the RNA methyltransferase TrmD family. In terms of assembly, homodimer.

It localises to the cytoplasm. The catalysed reaction is guanosine(37) in tRNA + S-adenosyl-L-methionine = N(1)-methylguanosine(37) in tRNA + S-adenosyl-L-homocysteine + H(+). In terms of biological role, specifically methylates guanosine-37 in various tRNAs. The polypeptide is tRNA (guanine-N(1)-)-methyltransferase (Mesomycoplasma hyopneumoniae (strain 232) (Mycoplasma hyopneumoniae)).